The chain runs to 816 residues: Homeobox-leucine zipper protein ROC9 (816 aa).

Residues 26 to 104 form a disordered region; that stretch reads VFGRKNGPAA…RRKNYHRHTA (79 aa). Residues 92-101 are compositionally biased toward basic residues; sequence KKRRRKNYHR. A DNA-binding region (homeobox) is located at residues 95–154; that stretch reads RRKNYHRHTAEQIRIMEALFKESPHPDERQRQQVSKQLGLSARQVKFWFQNRRTQIKAVQ. The stretch at 149–182 forms a coiled coil; the sequence is QIKAVQERHENSLLKSELEKLQDEHRAMRELAKK. Residues 265-296 are disordered; it reads KSAADGIASPPCSASAGAMQTNSRSPPLHDHD. Positions 302-541 constitute an START domain; sequence HDDDKPRILE…LQLQCERMVF (240 aa).

Belongs to the HD-ZIP homeobox family. Class IV subfamily.

It is found in the nucleus. Probable transcription factor. In Oryza sativa subsp. japonica (Rice), this protein is Homeobox-leucine zipper protein ROC9 (ROC9).